Reading from the N-terminus, the 1004-residue chain is Bifunctional glutamine synthetase adenylyltransferase/adenylyl-removing enzyme (1004 aa).

The tract at residues 1–497 (MCCTTVVVVR…LHAKLFYQPL (497 aa)) is adenylyl removase. The tract at residues 502–1004 (GPASLEIRHG…KTFVRKVFGS (503 aa)) is adenylyl transferase.

It belongs to the GlnE family. The cofactor is Mg(2+).

The enzyme catalyses [glutamine synthetase]-O(4)-(5'-adenylyl)-L-tyrosine + phosphate = [glutamine synthetase]-L-tyrosine + ADP. The catalysed reaction is [glutamine synthetase]-L-tyrosine + ATP = [glutamine synthetase]-O(4)-(5'-adenylyl)-L-tyrosine + diphosphate. In terms of biological role, involved in the regulation of glutamine synthetase GlnA, a key enzyme in the process to assimilate ammonia. When cellular nitrogen levels are high, the C-terminal adenylyl transferase (AT) inactivates GlnA by covalent transfer of an adenylyl group from ATP to specific tyrosine residue of GlnA, thus reducing its activity. Conversely, when nitrogen levels are low, the N-terminal adenylyl removase (AR) activates GlnA by removing the adenylyl group by phosphorolysis, increasing its activity. The regulatory region of GlnE binds the signal transduction protein PII (GlnB) which indicates the nitrogen status of the cell. This is Bifunctional glutamine synthetase adenylyltransferase/adenylyl-removing enzyme from Mycobacterium leprae (strain TN).